The sequence spans 648 residues: Cell surface glycoprotein MUC18 (648 aa).

The signal sequence occupies residues 1-23 (MGLPRLVCAFLFAACCCCRSATG). 2 Ig-like V-type domains span residues 24–131 (VPGE…HYVQ) and 141–244 (PTIQ…KEVT). Over 24-560 (VPGEEKQPTP…EKKLPQQESK (537 aa)) the chain is Extracellular. Intrachain disulfides connect Cys50-Cys118, Cys163-Cys225, Cys274-Cys322, Cys367-Cys409, and Cys454-Cys501. N-linked (GlcNAc...) asparagine glycosylation is present at Asn58. 3 Ig-like C2-type domains span residues 246 to 332 (PVLY…TTVM), 337 to 426 (PLEL…RRVS), and 432 to 512 (SPWM…SNTT). The segment at 282–304 (PHFTINKKNPSTEEMEEESTDEN) is disordered. An N-linked (GlcNAc...) asparagine glycan is attached at Asn510. Residues 527–549 (DSSQTTGLSTPTVSPHSRANSTS) show a composition bias toward polar residues. A disordered region spans residues 527–554 (DSSQTTGLSTPTVSPHSRANSTSTEKKL). Residues 561–581 (GVVIVAVIVCTLVLAVLGATL) traverse the membrane as a helical segment. The Cytoplasmic segment spans residues 582–648 (YYFYKKGKLP…QGEKYIDLRH (67 aa)). Phosphoserine is present on residues Ser608 and Ser616. Positions 626-648 (LQGSNGDKRAPGDQGEKYIDLRH) are disordered. Residues 631–648 (GDKRAPGDQGEKYIDLRH) are compositionally biased toward basic and acidic residues.

In terms of tissue distribution, detected in lung, uterus and placenta (at protein level). Detected in heart, lung, kidney, adrenal gland, intestine, testis, skeletal muscle and aorta. Detected at low levels in adult brain, in particular in brain stem and spinal cord, but also in hippocampus, olfactory bulb and striatum (at protein level).

The protein resides in the cell membrane. Its subcellular location is the perikaryon. Its function is as follows. Plays a role in cell adhesion, and in cohesion of the endothelial monolayer at intercellular junctions in vascular tissue. Its expression may allow melanoma cells to interact with cellular elements of the vascular system, thereby enhancing hematogeneous tumor spread. Could be an adhesion molecule active in neural crest cells during embryonic development. Acts as a surface receptor that triggers tyrosine phosphorylation of FYN and PTK2/FAK1, and a transient increase in the intracellular calcium concentration. The chain is Cell surface glycoprotein MUC18 (Mcam) from Rattus norvegicus (Rat).